A 562-amino-acid chain; its full sequence is Cell division protein FtsZ (562 aa).

Residues Gly-23 to Asn-27, Gly-110 to Gly-112, Glu-141, Arg-145, and Asp-189 each bind GTP. The segment covering Pro-404 to Pro-413 has biased composition (low complexity). Disordered stretches follow at residues Pro-404–Pro-428 and Glu-462–Asn-562. Residues Phe-418–Pro-428 show a composition bias toward basic and acidic residues. Low complexity-rich tracts occupy residues Ala-464–Arg-486 and Gly-500–Pro-510.

This sequence belongs to the FtsZ family. In terms of assembly, homodimer. Polymerizes to form a dynamic ring structure in a strictly GTP-dependent manner. Interacts directly with several other division proteins. Interacts with FtsZ-like protein (also called FtsZm).

The protein resides in the cytoplasm. Its function is as follows. Essential cell division protein that forms a contractile ring structure (Z ring) at the future cell division site. The regulation of the ring assembly controls the timing and the location of cell division. One of the functions of the FtsZ ring is to recruit other cell division proteins to the septum to produce a new cell wall between the dividing cells. Binds GTP and shows GTPase activity. Mild overexpression impairs cell division, leading to very elongated cells. Isolated protein forms filaments and bundles in the presence of GTP. This chain is Cell division protein FtsZ, found in Magnetospirillum gryphiswaldense (strain DSM 6361 / JCM 21280 / NBRC 15271 / MSR-1).